Consider the following 751-residue polypeptide: ATP-dependent DNA helicase Hel308 (751 aa).

Residues Gln20 and 39-46 (IPTASGKT) each bind ATP. A Helicase ATP-binding domain is found at 26–196 (EGLLDKSKNF…WLNAKLVTDE (171 aa)). A DEAH box motif is present at residues 143-146 (DEIH). The Helicase C-terminal domain occupies 235–435 (NLTDLIVDSV…VLRVHILGLI (201 aa)).

This sequence belongs to the helicase family. Hel308 subfamily. Monomer.

The catalysed reaction is Couples ATP hydrolysis with the unwinding of duplex DNA by translocating in the 3'-5' direction.. It catalyses the reaction ATP + H2O = ADP + phosphate + H(+). Its function is as follows. DNA-dependent ATPase and 3'-5' DNA helicase that may be involved in repair of stalled replication forks. The chain is ATP-dependent DNA helicase Hel308 from Methanococcus vannielii (strain ATCC 35089 / DSM 1224 / JCM 13029 / OCM 148 / SB).